The primary structure comprises 313 residues: Type II methyltransferase M.NlaX (313 aa).

The SAM-dependent MTase C5-type domain maps to 2–308 (FKIIDLFAGI…EQMKAALSAV (307 aa)). Residue Cys-74 is part of the active site.

The protein belongs to the class I-like SAM-binding methyltransferase superfamily. C5-methyltransferase family.

The enzyme catalyses a 2'-deoxycytidine in DNA + S-adenosyl-L-methionine = a 5-methyl-2'-deoxycytidine in DNA + S-adenosyl-L-homocysteine + H(+). A methylase, recognizes the double-stranded sequence 5'-CCNGG-3' and methylates C-2 on both strands. May be the equivalent of dcm in this bacteria, or it may protect the DNA from cleavage by the putative NlaXP endonuclease. The chain is Type II methyltransferase M.NlaX (nlaXM) from Neisseria lactamica.